We begin with the raw amino-acid sequence, 65 residues long: Beta-toxin Tf4a (65 aa).

Residues 2-63 (KEGYPADSKG…VWDSATNKCG (62 aa)) form the LCN-type CS-alpha/beta domain. 4 cysteine pairs are disulfide-bonded: C12–C62, C16–C38, C24–C43, and C28–C45. C62 carries the cysteine amide modification.

This sequence belongs to the long (4 C-C) scorpion toxin superfamily. Sodium channel inhibitor family. Alpha subfamily. In terms of tissue distribution, expressed by the venom gland.

The protein resides in the secreted. Alpha toxins bind voltage-independently at site-3 of sodium channels (Nav) and inhibit the inactivation of the activated channels, thereby blocking neuronal transmission. This toxin is toxic to frogs but non-toxic to insect larvae (T.molitor), mammals (rats) and crustaceans (crabs) at the doses assayed. The polypeptide is Beta-toxin Tf4a (Tityus fasciolatus (Central Brazilian scorpion)).